A 350-amino-acid chain; its full sequence is Dihydroorotate dehydrogenase (quinone) (350 aa).

FMN-binding positions include alanine 65–lysine 69 and threonine 89. Lysine 69 is a substrate binding site. Asparagine 114–phenylalanine 118 contributes to the substrate binding site. Residues asparagine 149 and asparagine 182 each contribute to the FMN site. Substrate is bound at residue asparagine 182. The active-site Nucleophile is serine 185. Asparagine 187 serves as a coordination point for substrate. 2 residues coordinate FMN: lysine 227 and threonine 255. Asparagine 256 to threonine 257 is a substrate binding site. FMN-binding positions include glycine 278, glycine 307, and tyrosine 328–threonine 329.

Belongs to the dihydroorotate dehydrogenase family. Type 2 subfamily. Monomer. The cofactor is FMN.

Its subcellular location is the cell membrane. It catalyses the reaction (S)-dihydroorotate + a quinone = orotate + a quinol. It participates in pyrimidine metabolism; UMP biosynthesis via de novo pathway; orotate from (S)-dihydroorotate (quinone route): step 1/1. Its function is as follows. Catalyzes the conversion of dihydroorotate to orotate with quinone as electron acceptor. This is Dihydroorotate dehydrogenase (quinone) from Polaromonas naphthalenivorans (strain CJ2).